The primary structure comprises 345 residues: Anthranilate phosphoribosyltransferase (345 aa).

5-phospho-alpha-D-ribose 1-diphosphate-binding positions include Gly80, 83–84 (GD), Thr88, 90–93 (NIST), 108–116 (KHGNRSVSS), and Ser120. Gly80 provides a ligand contact to anthranilate. Ser92 lines the Mg(2+) pocket. Asn111 lines the anthranilate pocket. Residue Arg166 participates in anthranilate binding. Residues Asp225 and Glu226 each coordinate Mg(2+).

Belongs to the anthranilate phosphoribosyltransferase family. As to quaternary structure, homodimer. The cofactor is Mg(2+).

It carries out the reaction N-(5-phospho-beta-D-ribosyl)anthranilate + diphosphate = 5-phospho-alpha-D-ribose 1-diphosphate + anthranilate. It participates in amino-acid biosynthesis; L-tryptophan biosynthesis; L-tryptophan from chorismate: step 2/5. Functionally, catalyzes the transfer of the phosphoribosyl group of 5-phosphorylribose-1-pyrophosphate (PRPP) to anthranilate to yield N-(5'-phosphoribosyl)-anthranilate (PRA). The chain is Anthranilate phosphoribosyltransferase from Acetivibrio thermocellus (strain ATCC 27405 / DSM 1237 / JCM 9322 / NBRC 103400 / NCIMB 10682 / NRRL B-4536 / VPI 7372) (Clostridium thermocellum).